We begin with the raw amino-acid sequence, 373 residues long: GDP-mannose 4,6-dehydratase (373 aa).

NADP(+)-binding positions include 10-15 (GITGQD), 65-66 (DL), 87-91 (LGAQS), and tyrosine 102. Threonine 134 is an active-site residue. Catalysis depends on nucleophile residues glutamate 136 and tyrosine 158. 3 residues coordinate NADP(+): lysine 162, histidine 188, and arginine 193.

This sequence belongs to the NAD(P)-dependent epimerase/dehydratase family. GDP-mannose 4,6-dehydratase subfamily. NADP(+) serves as cofactor.

It catalyses the reaction GDP-alpha-D-mannose = GDP-4-dehydro-alpha-D-rhamnose + H2O. In terms of biological role, catalyzes the conversion of GDP-D-mannose to GDP-4-dehydro-6-deoxy-D-mannose. The polypeptide is GDP-mannose 4,6-dehydratase (Vibrio cholerae serotype O1 (strain ATCC 39315 / El Tor Inaba N16961)).